The following is a 605-amino-acid chain: Elongation factor 4 (605 aa).

A tr-type G domain is found at 9–192 (SRIRNFCIIA…AIIARVPSPA (184 aa)). GTP-binding positions include 21 to 26 (DHGKST) and 139 to 142 (NKID).

The protein belongs to the TRAFAC class translation factor GTPase superfamily. Classic translation factor GTPase family. LepA subfamily.

Its subcellular location is the cell inner membrane. The catalysed reaction is GTP + H2O = GDP + phosphate + H(+). In terms of biological role, required for accurate and efficient protein synthesis under certain stress conditions. May act as a fidelity factor of the translation reaction, by catalyzing a one-codon backward translocation of tRNAs on improperly translocated ribosomes. Back-translocation proceeds from a post-translocation (POST) complex to a pre-translocation (PRE) complex, thus giving elongation factor G a second chance to translocate the tRNAs correctly. Binds to ribosomes in a GTP-dependent manner. The protein is Elongation factor 4 of Chlorobium phaeovibrioides (strain DSM 265 / 1930) (Prosthecochloris vibrioformis (strain DSM 265)).